The chain runs to 487 residues: Cytochrome P450 2C4 (487 aa).

Residue Cys-432 coordinates heme.

Belongs to the cytochrome P450 family. The cofactor is heme.

It localises to the endoplasmic reticulum membrane. It is found in the microsome membrane. The enzyme catalyses an organic molecule + reduced [NADPH--hemoprotein reductase] + O2 = an alcohol + oxidized [NADPH--hemoprotein reductase] + H2O + H(+). In terms of biological role, cytochromes P450 are a group of heme-thiolate monooxygenases. In liver microsomes, this enzyme is involved in an NADPH-dependent electron transport pathway. It oxidizes a variety of structurally unrelated compounds, including steroids, fatty acids, and xenobiotics. This Oryctolagus cuniculus (Rabbit) protein is Cytochrome P450 2C4 (CYP2C4).